The sequence spans 179 residues: Deoxyuridine 5'-triphosphate nucleotidohydrolase, mitochondrial (179 aa).

A mitochondrion-targeting transit peptide spans Met-1 to Lys-41. Residues Arg-97–Gly-99, Gly-111–Asp-114, Gly-122, Arg-165, and Phe-170–Gly-171 each bind dUTP.

This sequence belongs to the dUTPase family. In terms of assembly, homotrimer. Mg(2+) serves as cofactor.

Its subcellular location is the mitochondrion. The catalysed reaction is dUTP + H2O = dUMP + diphosphate + H(+). It functions in the pathway pyrimidine metabolism; dUMP biosynthesis; dUMP from dCTP (dUTP route): step 2/2. In terms of biological role, this enzyme is involved in nucleotide metabolism: it produces dUMP, the immediate precursor of thymidine nucleotides and it decreases the intracellular concentration of dUTP so that uracil cannot be incorporated into DNA. In Dictyostelium discoideum (Social amoeba), this protein is Deoxyuridine 5'-triphosphate nucleotidohydrolase, mitochondrial (dut).